We begin with the raw amino-acid sequence, 961 residues long: Mitogen-activated protein kinase kinase kinase 13-B (961 aa).

Positions 89–115 (RDQDEPENTAPQGSSHSGDGGNNSANE) are disordered. Low complexity predominate over residues 101 to 114 (GSSHSGDGGNNSAN). The Protein kinase domain maps to 171-412 (ISELQWLGSG…FRQILMHLDI (242 aa)). ATP-binding positions include 177-185 (LGSGAQGAV) and Lys-198. Asp-282 (proton acceptor) is an active-site residue. Leucine-zipper stretches follow at residues 436 to 457 (VKKHFEKIKSEGTCIHRLDEEL) and 489 to 510 (LSSIMLQLEVREKELTRREQTV). Residues 460–497 (RRREELRHALDIREHYERKLERANNLYMELSSIMLQLE) adopt a coiled-coil conformation. 3 disordered regions span residues 507 to 644 (EQTV…ETSQ), 796 to 874 (TPPA…DVAC), and 933 to 961 (NAESDCDSSEGECSDATVRTNNPVNSSTW). Residues 563 to 580 (AEGSAASASPISGSPKTS) show a composition bias toward low complexity. Residues 586 to 598 (GRYRSKPRHRRGN) are compositionally biased toward basic residues. Residues 613 to 628 (QESPAPSQQSSQHQTP) show a composition bias toward low complexity. Acidic residues predominate over residues 813–826 (DSSEGEEGEVDSEV). Residues 814–827 (SSEGEEGEVDSEVE) form an acidic region. Residues 839-854 (STCQSYSTFSSENFSV) show a composition bias toward polar residues. The span at 934 to 945 (AESDCDSSEGEC) shows a compositional bias: acidic residues. A compositionally biased stretch (polar residues) spans 949–961 (TVRTNNPVNSSTW).

Belongs to the protein kinase superfamily. Ser/Thr protein kinase family.

It is found in the cytoplasm. The protein resides in the membrane. It carries out the reaction L-seryl-[protein] + ATP = O-phospho-L-seryl-[protein] + ADP + H(+). The catalysed reaction is L-threonyl-[protein] + ATP = O-phospho-L-threonyl-[protein] + ADP + H(+). Functionally, may have a role in the JNK signaling pathway. This Xenopus laevis (African clawed frog) protein is Mitogen-activated protein kinase kinase kinase 13-B (map3k13-b).